The following is a 729-amino-acid chain: Ubiquitin carboxyl-terminal hydrolase BAP1 (729 aa).

The UCH catalytic domain occupies 4-235; that stretch reads GWLELESDPG…IRFNLMAVVP (232 aa). An Arg-finger motif motif is present at residues 56–60; it reads RRSRR. The active-site Nucleophile is C91. H169 acts as the Proton donor in catalysis. S292 carries the post-translational modification Phosphoserine. Positions 301 to 351 are disordered; sequence APAASEGNHTDGAEEAAGSCAQAPSHSPPNKPKLVVKPPGSSLNGVHPNPT. The HBM-like motif motif lies at 363–366; it reads NHNY. Residues S369 and S395 each carry the phosphoserine modification. 2 disordered regions span residues 372 to 435 and 464 to 524; these read QEEE…SADG and SIKT…SPVT. The segment covering 395–409 has biased composition (acidic residues); the sequence is SDDEDDYEDDEEDDV. The span at 480–524 shows a compositional bias: polar residues; the sequence is THSQPSPTPSNESTDTASEIGSAFNSPLRSPIRSANPTRPSSPVT. T493 carries the phosphothreonine modification. S521, S537, S585, and S597 each carry phosphoserine. Residues 575–623 form a disordered region; sequence LTEGGKGSSPSIRPIQGSQGSSSPVEKEVVEATDSREKTGMVRPGEPLS. Residues 582–598 are compositionally biased toward polar residues; sequence SSPSIRPIQGSQGSSSP. The interval 596-721 is interaction with BRCA1; sequence SSPVEKEVVE…QRKPDRRKRS (126 aa). Residues 599-614 show a composition bias toward basic and acidic residues; sequence VEKEVVEATDSREKTG. The stretch at 636 to 656 forms a coiled coil; the sequence is LKCVEAEIANYEACLKEEVEK. Positions 642-686 are interaction with YY1; sequence EIANYEACLKEEVEKRKKFKIDDQRRTHNYDEFICTFISMLAQEG. The ULD domain occupies 670–698; that stretch reads NYDEFICTFISMLAQEGMLANLVEQNISV. Residues 699–701 are interaction with nucleosomal DNA forming a DNA clamp with ASXL1; the sequence is RRR. The Classical bipartite Nuclear localization signal (NLS) motif lies at 699–722; that stretch reads RRRQGVSIGRLHKQRKPDRRKRSR. The interval 703–729 is disordered; sequence GVSIGRLHKQRKPDRRKRSRPYKAKRQ. Positions 713–729 are positively charged C-terminal extension (CTE); sequence RKPDRRKRSRPYKAKRQ. The Non-classical PY-nuclear localization signal (PY-NLS) signature appears at 717–724; sequence RRKRSRPY.

The protein belongs to the peptidase C12 family. BAP1 subfamily. In terms of assembly, core component of the polycomb repressive deubiquitinase (PR-DUB) complex, at least composed of BAP1, one of ASXL1, ASXL2 or (probably) ASXL3, and one of MBD5 or MBD6. The PR-DUB core associates with a number of accessory proteins, including FOXK1, FOXK2, KDM1B, HCFC1, YY1 and OGT; KDM1B specifically associates with ASXL2 PR-DUB complexes. The BAP1 deubiquitinase activity is not required for PR-DUB assembly. Homodimerizes (via coiled-coil hinge-region between the UCH and ULD domains) to mediate assembly of 2 copies of the BAP1-ASXL heterodimer into a bisymmetric tetramer; dimerization enhances association with nucleosomes. The PR-DUB complex associates with nucleosomes to mediate deubiquitination of 'lys-120' of histone H2AK118ub1 substrates; the association requires the positively charged C-terminal tail of BAP1. Interacts (via ULD domain) with ASXL1 (via DEUBAD domain); the interaction is direct and forms a ubiquitin binding cleft. The interaction with ASXL1 stabilizes BAP1 but is not required for nucleosome binding. Associates (via C-terminus) with nucleosome and chromatosome complexes through direct interaction with DNA and the histone3/4 dimer; this association displaces the histone-2A C-terminal tail, extending and orienting the H2AK118ub1 substrate towards the BAP1 deubiquitinase active site. Also interacts (via arginine finger) directly with the histone H2A-H2B acidic patch; this interaction is not critical for nucleosome-chromatosome association but may play a role in orienting the H2AK118ub1 substrate towards the PR-DUB complex active site. Interacts with BRCA1 (via the RING finger). Interacts (via HBM-like motif) with HCFC1. Interacts (via a C-terminal region overlapping the ULD domain) with YY1; the interaction is direct and requires the interaction with HCFC1. Interacts (when phosphorylated at Thr-493) with FOXK1. Interacts (when phosphorylated at Thr-493) with FOXK2; leading to recruitment of the PR-DUB complex and repression of FOXK2 target genes. Interacts (via non-classical PY-NLS) with TNPO1/transportin-1 (via HEAT repeats 8-12); the interaction is direct, mediates BAP1 nuclear localization and disrupts BAP1 homodimerization. Interacts (via C-terminus) with KPNA1/importin alpha5 and KPNA2/importin alpha1; these interactions can contribute to BAP1 nuclear localization but are less important than the interaction with TNPO1/transportin-1. The interaction with TNPO1/transportin-1 disrupts homodimerization and blocks ubiquitination by UBE2O. Ubiquitinated: monoubiquitinated at multiple sites within its nuclear localization signal (NLS) BY UBE2O, leading to cytoplasmic retention. Able to mediate autodeubiquitination via intramolecular interactions to counteract cytoplasmic retention. Monoubiquitinated on at least 4 sites near or within its PY-NLS. As to expression, highly expressed in testis, placenta and ovary. Expressed in breast. levels in the placenta increase over the course of pregnancy.

Its subcellular location is the cytoplasm. It is found in the nucleus. The protein localises to the chromosome. It catalyses the reaction Thiol-dependent hydrolysis of ester, thioester, amide, peptide and isopeptide bonds formed by the C-terminal Gly of ubiquitin (a 76-residue protein attached to proteins as an intracellular targeting signal).. Its function is as follows. Deubiquitinating enzyme that plays a key role in chromatin by mediating deubiquitination of histone H2A and HCFC1. Catalytic component of the polycomb repressive deubiquitinase (PR-DUB) complex, a complex that specifically mediates deubiquitination of histone H2A monoubiquitinated at 'Lys-120' (H2AK119ub1). Does not deubiquitinate monoubiquitinated histone H2B. The PR-DUB complex is an epigenetic regulator of gene expression and acts as a transcriptional coactivator, affecting genes involved in development, cell communication, signaling, cell proliferation and cell viability. Antagonizes PRC1 mediated H2AK119ub1 monoubiquitination. As part of the PR-DUB complex, associates with chromatin enriched in histone marks H3K4me1, H3K4me3, and H3K27Ac, but not in H3K27me3. Recruited to specific gene-regulatory regions by YY1. Acts as a regulator of cell growth by mediating deubiquitination of HCFC1 N-terminal and C-terminal chains, with some specificity toward 'Lys-48'-linked polyubiquitin chains compared to 'Lys-63'-linked polyubiquitin chains. Deubiquitination of HCFC1 does not lead to increase stability of HCFC1. Interferes with the BRCA1 and BARD1 heterodimer activity by inhibiting their ability to mediate ubiquitination and autoubiquitination. It however does not mediate deubiquitination of BRCA1 and BARD1. Able to mediate autodeubiquitination via intramolecular interactions to counteract monoubiquitination at the nuclear localization signal (NLS), thereby protecting it from cytoplasmic sequestration. Negatively regulates epithelial-mesenchymal transition (EMT) of trophoblast stem cells during placental development by regulating genes involved in epithelial cell integrity, cell adhesion and cytoskeletal organization. The protein is Ubiquitin carboxyl-terminal hydrolase BAP1 of Homo sapiens (Human).